A 474-amino-acid polypeptide reads, in one-letter code: MSEGLVQAAYILAALLFIMSLAGLSKHETAKAGCWFGIVGMTIALIATIFGPHSEGTFWIIIAMIIGGAIGVQRALKVEMTEMPELVAILHSFVGLAAVLVGFNSYGLHHEALMPEGLDAAAQAAFVAEQAVLTNIHNVEVFLGIFIGAVTFTGSVVAFGKLSGKINSKALMLPHRHKLNLAALVVSALLMVAFLNNPESIFPVLLMTAIALAFGWHLVASIGGADMPVVVSMLNSYSGWAAAAAGFILNNDLLIVTGALVGSSGAILSYIMCKAMNRSFVSVIAGGFGNDVQVSSSEEQGEHRETTAEEVAELLKNASSVIITPGYGMAVAQAQYPVADITAKLRERGVNVRFGIHPVAGRLPGHMNVLLAEAKVPYDVVLEMDEINDDFADTDVVLVIGANDTVNPAAMEDPNSPIAGMPVLEVWKAQNVIVFKRSMAVGYAGVQNPLFFKENTQMLFGDAKDRVEDILKAL.

Transmembrane regions (helical) follow at residues 4-24, 46-66, 83-103, 132-152, 181-200, 202-222, 229-249, 253-273, and 321-341; these read GLVQ…LAGL, IATI…AMII, MPEL…LVGF, VLTN…AVTF, LAAL…NPES, FPVL…VASI, VVVS…GFIL, LLIV…YIMC, and VIIT…VADI.

Belongs to the PNT beta subunit family. As to quaternary structure, heterodimer of an alpha and a beta chain.

Its subcellular location is the cell inner membrane. The catalysed reaction is NAD(+) + NADPH + H(+)(in) = NADH + NADP(+) + H(+)(out). Functionally, the transhydrogenation between NADH and NADP is coupled to respiration and ATP hydrolysis and functions as a proton pump across the membrane. In Haemophilus influenzae (strain ATCC 51907 / DSM 11121 / KW20 / Rd), this protein is NAD(P) transhydrogenase subunit beta (pntB).